We begin with the raw amino-acid sequence, 144 residues long: Sentan (144 aa).

A disordered region spans residues 1-31 (MCGCRASVPSTKHYSVNPAPTTRSPPAAAGM). Positions 18–29 (PAPTTRSPPAAA) are enriched in low complexity.

The protein belongs to the S-100 family.

It localises to the cell projection. It is found in the cilium. Its function is as follows. May be a component of the linker structure that bridges the ciliary membrane and peripheral singlet microtubules. The protein is Sentan of Gallus gallus (Chicken).